Here is a 1001-residue protein sequence, read N- to C-terminus: Ribonuclease E/G-like protein, chloroplastic (1001 aa).

The N-terminal 48 residues, methionine 1–leucine 48, are a transit peptide targeting the chloroplast. Residues serine 76–serine 185 enclose the CBM20 domain. Aspartate 755 contacts Mg(2+). Residues glutamine 769–arginine 789 are a coiled coil. Aspartate 800 serves as a coordination point for Mg(2+). 2 residues coordinate Zn(2+): cysteine 858 and cysteine 861.

This sequence belongs to the RNase E/G family. As to quaternary structure, part of a chloroplastic degradosome-like complex. Interacts with RHON1. A homotetramer formed by a dimer of dimers. Requires Mg(2+) as cofactor. It depends on Zn(2+) as a cofactor. As to expression, expressed in cotyledons, rosette and cauline leaves.

The protein resides in the plastid. Its subcellular location is the chloroplast stroma. In terms of biological role, involved in intercistronic processing of primary transcripts from chloroplast operons. The endonucleolytic activity of the enzyme depends on the number of phosphates at the 5' end, is inhibited by structured RNA, and preferentially cleaves A/U-rich sequences. In Arabidopsis thaliana (Mouse-ear cress), this protein is Ribonuclease E/G-like protein, chloroplastic (RNE).